The following is a 302-amino-acid chain: tRNA pseudouridine synthase B (302 aa).

Asp-45 acts as the Nucleophile in catalysis.

Belongs to the pseudouridine synthase TruB family. Type 1 subfamily.

It catalyses the reaction uridine(55) in tRNA = pseudouridine(55) in tRNA. Functionally, responsible for synthesis of pseudouridine from uracil-55 in the psi GC loop of transfer RNAs. The polypeptide is tRNA pseudouridine synthase B (Francisella tularensis subsp. tularensis (strain FSC 198)).